The sequence spans 139 residues: uncharacterized protein (139 aa).

The disordered stretch occupies residues 83 to 109 (LIPPKKTSPATSSSLKPPRRPRGCLNG). Low complexity predominate over residues 86 to 98 (PKKTSPATSSSLK).

The protein to M.pneumoniae MPN_091 and MPN_463.

This is an uncharacterized protein from Mycoplasma pneumoniae (strain ATCC 29342 / M129 / Subtype 1) (Mycoplasmoides pneumoniae).